A 318-amino-acid chain; its full sequence is MLQTRKVGIVGIGHVGSHCALSMLLQGVCDEMVLMDIIPEKAKAHAIDCMDTISFLPHRAIIRDGGIQELSKMDVIVISVGSLTKNEQRLEELKGSLEAIKSFVPDVVKAGFNGIFVTITNPVDIVTYFVRELSGFPKNRVIGTGTGLDSARLKRILSEVTNIDSQVIQAYMLGEHGDTQIANFSSATIQGVPFLDYMKTHPEQFKGVELSVLEKQVVRTAWDIISGKNCTEFGIGCTCSNLVKAIFHNERRVLPCSAYLNGEYGHSGFYTGVPAIIGSNGVEEILELPLDERERKGFEDACAVMKKYIEVGKSYKIV.

The NAD(+) site is built by Val15, Asp36, and Lys41. Substrate is bound at residue Arg89. NAD(+)-binding positions include Ser102, Ile119–Asn121, and Thr144. Asn121 to Asp124 lines the substrate pocket. Residue Asp149–Arg152 coordinates substrate. Residue His176 is the Proton acceptor of the active site. Residue Thr231 participates in substrate binding.

The protein belongs to the LDH/MDH superfamily. LDH family. Homotetramer.

Its subcellular location is the cytoplasm. The catalysed reaction is (S)-lactate + NAD(+) = pyruvate + NADH + H(+). The protein operates within fermentation; pyruvate fermentation to lactate; (S)-lactate from pyruvate: step 1/1. Catalyzes the conversion of lactate to pyruvate. This Fusobacterium nucleatum subsp. nucleatum (strain ATCC 25586 / DSM 15643 / BCRC 10681 / CIP 101130 / JCM 8532 / KCTC 2640 / LMG 13131 / VPI 4355) protein is L-lactate dehydrogenase.